A 485-amino-acid chain; its full sequence is UDP-N-acetylmuramate--L-alanine ligase (485 aa).

Gly-127–Thr-133 lines the ATP pocket.

This sequence belongs to the MurCDEF family.

It is found in the cytoplasm. The catalysed reaction is UDP-N-acetyl-alpha-D-muramate + L-alanine + ATP = UDP-N-acetyl-alpha-D-muramoyl-L-alanine + ADP + phosphate + H(+). It functions in the pathway cell wall biogenesis; peptidoglycan biosynthesis. In terms of biological role, cell wall formation. This Shewanella frigidimarina (strain NCIMB 400) protein is UDP-N-acetylmuramate--L-alanine ligase.